The chain runs to 594 residues: Aspartate--tRNA(Asp/Asn) ligase (594 aa).

Glu175 provides a ligand contact to L-aspartate. The tract at residues 199–202 is aspartate; sequence QLFK. Arg221 lines the L-aspartate pocket. Residues 221-223 and Gln230 each bind ATP; that span reads RDE. His446 serves as a coordination point for L-aspartate. Glu491 contributes to the ATP binding site. Arg498 is an L-aspartate binding site. An ATP-binding site is contributed by 543–546; it reads GLDR.

The protein belongs to the class-II aminoacyl-tRNA synthetase family. Type 1 subfamily. As to quaternary structure, homodimer.

Its subcellular location is the cytoplasm. The catalysed reaction is tRNA(Asx) + L-aspartate + ATP = L-aspartyl-tRNA(Asx) + AMP + diphosphate. Aspartyl-tRNA synthetase with relaxed tRNA specificity since it is able to aspartylate not only its cognate tRNA(Asp) but also tRNA(Asn). Reaction proceeds in two steps: L-aspartate is first activated by ATP to form Asp-AMP and then transferred to the acceptor end of tRNA(Asp/Asn). The protein is Aspartate--tRNA(Asp/Asn) ligase of Thermodesulfovibrio yellowstonii (strain ATCC 51303 / DSM 11347 / YP87).